Reading from the N-terminus, the 538-residue chain is Calcium-dependent protein kinase 3 (538 aa).

A disordered region spans residues 23-70; that stretch reads PKKSIERIKKKKDSNKSIKSQHKFEGSKISNKNNELKDVKSKDPKNYE. Residues 56 to 68 are compositionally biased toward basic and acidic residues; sequence NELKDVKSKDPKN. In terms of domain architecture, Protein kinase spans 112–367; that stretch reads NLSEEPLGKG…ASEALKHPWF (256 aa). ATP contacts are provided by residues 118-126 and Lys-141; that span reads LGKGTYGCV. Asp-232 functions as the Proton acceptor in the catalytic mechanism. The short motif at 387 to 395 is the J domain autoinhibitory motif element; the sequence is NFKNYALLL. The tract at residues 387–422 is j domain; that stretch reads NFKNYALLLKLQKLAMTIIAQQSNDYDLQQLKAVFL. The J domain EF-hand interaction motif signature appears at 396–405; the sequence is KLQKLAMTII. EF-hand domains follow at residues 412–447, 450–481, and 482–517; these read YDLQQLKAVFLYLDEDGKGNITKNQLKKGLENSGLK, QNFDVLLDQIDSDGSGRIDYTEFLAAALDRKH, and LSKKLIYCAFRVFDVDNDGEITTAELAHVTFFVILF. Ca(2+)-binding residues include Asp-460, Asp-462, Ser-464, Arg-466, Glu-471, Asp-495, Asp-497, Asp-499, Glu-501, and Glu-506.

The protein belongs to the protein kinase superfamily. Ser/Thr protein kinase family. CDPK subfamily. The cofactor is Mg(2+).

It localises to the cytoplasm. It carries out the reaction L-seryl-[protein] + ATP = O-phospho-L-seryl-[protein] + ADP + H(+). The catalysed reaction is L-threonyl-[protein] + ATP = O-phospho-L-threonyl-[protein] + ADP + H(+). Activated by calcium. Upon calcium binding to the EF-hand domain 2, the C-terminus of the junction domain (J domain) undergoes a conformational change which results in the dissociation of the pseudo-substrate inhibitory motif from the catalytic domain. This, in turn, may facilitate the autophosphorylation of the activation loop at Thr-273, which leads to the kinase activation. Calcium-dependent protein kinase which acts as a sensor and effector of intracellular Ca(2+) levels probably in part downstream of cGMP-activated PKG kinase. In the mosquito midgut, regulates the gliding motility of the ookinete which is essential for the ookinete to invade the midgut epithelium. However, another study showed that while required for ookinete invasion of the midgut epithelium, is not required for ookinete gliding motility. The protein is Calcium-dependent protein kinase 3 of Plasmodium yoelii yoelii.